We begin with the raw amino-acid sequence, 688 residues long: Sodium channel and clathrin linker 1 (688 aa).

At Ala2 the chain carries N-acetylalanine. Residues 69-673 (ELNGQLKYYQ…SASQQLSVIT (605 aa)) adopt a coiled-coil conformation. Ser681 is subject to Phosphoserine.

Interacts with SCN10A and clathrin. Identified in a complex containing SCN10A, clathrin and SCLT1.

The protein resides in the cytoplasm. It localises to the cytoskeleton. It is found in the microtubule organizing center. Its subcellular location is the centrosome. The protein localises to the centriole. In terms of biological role, adapter protein that links SCN10A to clathrin. Regulates SCN10A channel activity, possibly by promoting channel internalization. The polypeptide is Sodium channel and clathrin linker 1 (SCLT1) (Homo sapiens (Human)).